Consider the following 211-residue polypeptide: MSDSSDDEITLSKESLSALQDFYKSREVEQQDKFEISEDWQLSQFWYEEETSKFVANVIEQETIGGNVVVCLSTPSIYKVLHKNNNLLLNNNLFEYDKRFDVYGEKFHFYDYNNPEDGISEQLKGNVDYICLDPPFLSEECIEKVAKTIALLRKPTTRLLLLTGRIQWNNIQKYLPEMMICEFEPKHPRLQNDFFCCSNYHSKLLGLENKK.

Belongs to the class I-like SAM-binding methyltransferase superfamily. EFM5 family.

The protein localises to the cytoplasm. S-adenosyl-L-methionine-dependent protein-lysine N-methyltransferase that methylates elongation factor 1-alpha. In Dictyostelium discoideum (Social amoeba), this protein is Protein-lysine N-methyltransferase DDB_G0272708.